Here is a 115-residue protein sequence, read N- to C-terminus: Large ribosomal subunit protein bL20c (115 aa).

The protein belongs to the bacterial ribosomal protein bL20 family.

Its subcellular location is the plastid. It localises to the chloroplast. In terms of biological role, binds directly to 23S ribosomal RNA and is necessary for the in vitro assembly process of the 50S ribosomal subunit. It is not involved in the protein synthesizing functions of that subunit. The polypeptide is Large ribosomal subunit protein bL20c (Angiopteris evecta (Mule's foot fern)).